The following is a 427-amino-acid chain: Adenylosuccinate synthetase (427 aa).

GTP is bound by residues Gly13–Lys19 and Gly41–Thr43. The Proton acceptor role is filled by Asp14. The Mg(2+) site is built by Asp14 and Gly41. Residues Asp14 to Lys17, Asn39 to His42, Thr129, Arg143, Gln224, Thr239, and Arg303 contribute to the IMP site. Residue His42 is the Proton donor of the active site. Residues Gln117–Tyr137 form a disordered region. Thr299 to Arg305 contacts substrate. GTP-binding positions include Arg305, Lys331–Asp333, and Gly414–Gly416.

Belongs to the adenylosuccinate synthetase family. Homodimer. Mg(2+) serves as cofactor.

The protein resides in the cytoplasm. The catalysed reaction is IMP + L-aspartate + GTP = N(6)-(1,2-dicarboxyethyl)-AMP + GDP + phosphate + 2 H(+). It functions in the pathway purine metabolism; AMP biosynthesis via de novo pathway; AMP from IMP: step 1/2. Its function is as follows. Plays an important role in the de novo pathway of purine nucleotide biosynthesis. Catalyzes the first committed step in the biosynthesis of AMP from IMP. This is Adenylosuccinate synthetase from Caldicellulosiruptor saccharolyticus (strain ATCC 43494 / DSM 8903 / Tp8T 6331).